The chain runs to 522 residues: Putative ribose/galactose/methyl galactoside import ATP-binding protein (522 aa).

2 consecutive ABC transporter domains span residues 7 to 244 (LEMV…VGRE) and 254 to 498 (PKLG…TGQA). An ATP-binding site is contributed by 39 to 46 (GENGAGKS).

This sequence belongs to the ABC transporter superfamily. Carbohydrate importer 2 (CUT2) (TC 3.A.1.2) family.

The protein resides in the cell membrane. It carries out the reaction D-ribose(out) + ATP + H2O = D-ribose(in) + ADP + phosphate + H(+). The enzyme catalyses D-galactose(out) + ATP + H2O = D-galactose(in) + ADP + phosphate + H(+). In terms of biological role, part of an ABC transporter complex involved in carbohydrate import. Could be involved in ribose, galactose and/or methyl galactoside import. Responsible for energy coupling to the transport system. The protein is Putative ribose/galactose/methyl galactoside import ATP-binding protein of Halalkalibacterium halodurans (strain ATCC BAA-125 / DSM 18197 / FERM 7344 / JCM 9153 / C-125) (Bacillus halodurans).